The sequence spans 745 residues: uncharacterized protein (745 aa).

Positions 158–256 (NQVCDYIELH…HQTPKQYRGD (99 aa)) constitute an HTH araC/xylS-type domain. DNA-binding regions (H-T-H motif) lie at residues 175-196 (SELS…TESL) and 223-246 (ITDI…KHFT).

This is an uncharacterized protein from Staphylococcus aureus (strain Mu50 / ATCC 700699).